The primary structure comprises 723 residues: Pentatricopeptide repeat-containing protein At5g50280, chloroplastic (723 aa).

The N-terminal 44 residues, 1–44 (MSMASSSLATQSFFSSFPLSHRLHFPVPYLLLRSSFFRKPLSLS), are a transit peptide targeting the chloroplast. Residues 70–97 (IQQPENSTINSEESECEEEDDEEGDDFT) are disordered. Residues 81 to 97 (EESECEEEDDEEGDDFT) are compositionally biased toward acidic residues. 11 PPR repeats span residues 272–306 (DVRL…NVYP), 307–342 (DNVT…GVKW), 343–377 (SQDV…GIRS), 378–412 (NTIV…GLKP), 413–447 (SAAT…GLEP), 448–483 (NVKS…GLKP), 484–518 (SSHS…GIKP), 519–553 (SVET…KIKG), 554–588 (TRIT…GLQP), 589–623 (SVMT…NLKP), and 624–658 (DSIT…GQVP). The tract at residues 700–723 (TKGKKDEFWKYKTNRTTSPGRHRS) is disordered. Polar residues predominate over residues 713–723 (NRTTSPGRHRS).

The protein belongs to the PPR family. P subfamily.

It is found in the plastid. It localises to the chloroplast. This chain is Pentatricopeptide repeat-containing protein At5g50280, chloroplastic (EMB1006), found in Arabidopsis thaliana (Mouse-ear cress).